Here is a 548-residue protein sequence, read N- to C-terminus: T-complex protein 1 subunit theta (548 aa).

Ala2 carries the post-translational modification N-acetylalanine. ADP-binding residues include Tyr47 and Gly48. Asp99 is a binding site for Mg(2+). The ADP site is built by Gly100, Thr101, Asn102, Phe103, Met169, Ser170, Lys171, Gly412, and Asp499. ATP is bound by residues Gly100, Thr101, and Asn102. Residues Ser170, Lys171, Gly412, Asp499, and Lys504 each coordinate ATP. The residue at position 505 (Tyr505) is a Phosphotyrosine. The tract at residues 529 to 548 (PAGGPKPPSGKKDWDEDQND) is disordered.

In terms of assembly, component of the chaperonin-containing T-complex (TRiC), a hexadecamer composed of two identical back-to-back stacked rings enclosing a protein folding chamber. Each ring is made up of eight different subunits: TCP1/CCT1, CCT2, CCT3, CCT4, CCT5, CCT6A/CCT6, CCT7, CCT8.

The protein resides in the cytoplasm. It localises to the cytoskeleton. The protein localises to the microtubule organizing center. It is found in the centrosome. Its subcellular location is the cilium basal body. The catalysed reaction is ATP + H2O = ADP + phosphate + H(+). In terms of biological role, component of the chaperonin-containing T-complex (TRiC), a molecular chaperone complex that assists the folding of actin, tubulin and other proteins upon ATP hydrolysis. This is T-complex protein 1 subunit theta from Gallus gallus (Chicken).